A 212-amino-acid polypeptide reads, in one-letter code: Guanylate kinase (212 aa).

Residues 14–192 (GTALVICAPS…AYDELRATYL (179 aa)) enclose the Guanylate kinase-like domain. An ATP-binding site is contributed by 21-28 (APSGTGKT).

The protein belongs to the guanylate kinase family.

It is found in the cytoplasm. It catalyses the reaction GMP + ATP = GDP + ADP. In terms of biological role, essential for recycling GMP and indirectly, cGMP. The protein is Guanylate kinase of Lawsonia intracellularis (strain PHE/MN1-00).